Consider the following 262-residue polypeptide: UPF0758 protein R01728 (262 aa).

A disordered region spans residues 23–44 (PEKRTRNSPATAPAPATDTHYH). Residues 31–40 (PATAPAPATD) are compositionally biased toward low complexity. The 123-residue stretch at 140–262 (VLSSWSAVID…HVSLKGLRLF (123 aa)) folds into the MPN domain. The Zn(2+) site is built by His-211, His-213, and Asp-224. Residues 211–224 (HNHPSGDPTPSRAD) carry the JAMM motif motif.

The protein belongs to the UPF0758 family.

In Rhizobium meliloti (strain 1021) (Ensifer meliloti), this protein is UPF0758 protein R01728.